The sequence spans 264 residues: Small ribosomal subunit protein uS2 (264 aa).

Belongs to the universal ribosomal protein uS2 family.

This Latilactobacillus sakei subsp. sakei (strain 23K) (Lactobacillus sakei subsp. sakei) protein is Small ribosomal subunit protein uS2.